Reading from the N-terminus, the 2774-residue chain is Microtubule-associated protein 1A (2774 aa).

Phosphoserine occurs at positions 114, 117, 118, 121, and 155. Position 177 is a phosphotyrosine (Tyr-177). Residues 310–329 form a disordered region; it reads PSKIKHRADSKESLKAAPKT. Residues Ser-319 and Ser-322 each carry the phosphoserine modification. Copy 1 of the repeat occupies 336–338; the sequence is KRE. The interval 336 to 541 is 11 X 3 AA repeats of K-K-[DE]; that stretch reads KREEVLEEGA…TQDFEELKRE (206 aa). Residues 342-390 are compositionally biased toward basic and acidic residues; the sequence is EEGAKEARSELAKELAKTEKKAKEPSEKPPEKPSKSERVRGESSEALKA. 9 disordered regions span residues 342–718, 737–808, 845–939, 957–1078, 1093–1344, 1357–1646, 1693–1725, 1739–1843, and 1861–2644; these read EEGA…SFLS, TIPG…TELT, EDQS…VGKE, FGAP…QTGC, ETGE…ILPE, QKDG…SPEQ, ESTF…KDFQ, LAES…VPFS, and AELE…LVNG. Ser-384 is modified (phosphoserine). The segment covering 391 to 406 has biased composition (basic residues); sequence EKRRLIKDKAGKKHLK. Composition is skewed to basic and acidic residues over residues 407 to 464 and 484 to 500; these read EKIS…KPDL and VKVD…ELSS. 9 consecutive repeat copies span residues 415 to 417, 420 to 422, 424 to 426, 427 to 429, 431 to 433, 436 to 438, 440 to 442, 444 to 446, and 449 to 451. Thr-504 carries the phosphothreonine modification. The span at 506–516 shows a compositional bias: low complexity; that stretch reads PAQKGAAPPAA. Phosphoserine is present on residues Ser-526 and Ser-527. Composition is skewed to basic and acidic residues over residues 536–554 and 584–595; these read EELK…DTGL and EGEHVEREKEVV. The stretch at 539 to 541 is repeat 11; the sequence is KRE. Phosphoserine occurs at positions 604 and 611. Composition is skewed to basic and acidic residues over residues 614–631 and 638–675; these read EVEK…REAE and AARE…ETKA. Ser-643 is modified (phosphoserine). Residue Thr-663 is modified to Phosphothreonine. Ser-666, Ser-677, Ser-690, and Ser-785 each carry phosphoserine. Composition is skewed to polar residues over residues 845 to 858 and 869 to 881; these read EDQS…PQTE and TVTS…TEAT. A phosphoserine mark is found at Ser-872, Ser-875, Ser-876, and Ser-889. Thr-892 carries the phosphothreonine modification. 22 positions are modified to phosphoserine: Ser-894, Ser-898, Ser-907, Ser-980, Ser-990, Ser-998, Ser-1007, Ser-1013, Ser-1022, Ser-1029, Ser-1037, Ser-1061, Ser-1132, Ser-1134, Ser-1148, Ser-1160, Ser-1178, Ser-1188, Ser-1191, Ser-1197, Ser-1206, and Ser-1209. Residues 1008–1028 show a composition bias toward basic and acidic residues; it reads PVEDKSEPRDFQEDSWGETKH. Residues 1142–1157 show a composition bias toward polar residues; it reads SVLSVVSPDTTKQEAT. The segment covering 1180–1190 has biased composition (polar residues); the sequence is EDTQSLSFSEE. Positions 1198–1212 are enriched in polar residues; the sequence is LDISSKQLSPESLGT. Residues 1220–1236 are compositionally biased toward basic and acidic residues; it reads LGKEERGPVMKAEDDSC. Phosphoserine occurs at positions 1252, 1280, 1301, 1304, and 1307. Residues 1293–1308 are compositionally biased toward low complexity; the sequence is TSDSSLTKSPESLSSP. Composition is skewed to basic and acidic residues over residues 1317 to 1336, 1357 to 1409, 1416 to 1428, 1436 to 1479, and 1487 to 1574; these read WEGK…ETRQ, QKDG…EDQG, AEKD…RDTD, EPRD…EHSI, and RAPD…KADS. Phosphoserine occurs at positions 1504, 1568, 1574, and 1594. Residues 1599–1613 show a composition bias toward basic and acidic residues; it reads SKAREQEKKYWKEQD. 7 positions are modified to phosphoserine: Ser-1622, Ser-1643, Ser-1715, Ser-1742, Ser-1757, Ser-1763, and Ser-1767. Over residues 1707-1718 the composition is skewed to polar residues; it reads TPLQHTPRSPWT. Residue Thr-1772 is modified to Phosphothreonine. 2 positions are modified to phosphoserine: Ser-1778 and Ser-1784. Residues 1789–1803 are compositionally biased toward polar residues; sequence TESTAPMRNEPTTPS. Positions 1818–1839 are enriched in pro residues; the sequence is LPPAPLSPAPAPPTPAPEPHTP. Residues 1873–1885 are compositionally biased toward basic and acidic residues; that stretch reads KDYRKAEGEREGE. Ser-1897 carries the phosphoserine modification. Basic and acidic residues predominate over residues 1908-1930; sequence ATRDTEQTEPEQREPTPYPDERS. Thr-1923 is modified (phosphothreonine). Polar residues predominate over residues 1984-1997; sequence SSPASPQNLQSDTP. Phosphoserine is present on Ser-1988. The span at 2008–2034 shows a compositional bias: pro residues; the sequence is AVPPRQEPDPGPNVEPSITPPAVPPRA. Position 2026 is a phosphothreonine (Thr-2026). Phosphoserine is present on residues Ser-2043 and Ser-2077. Positions 2055 to 2092 are enriched in basic and acidic residues; the sequence is PDRRTPSPKETGRGHWDDGTNDSDLEKGAREQPEKETR. Positions 2115–2125 are enriched in low complexity; that stretch reads SSLSSDSHLGS. Pro residues predominate over residues 2144–2153; sequence PAPPQLPSPA. A phosphoserine mark is found at Ser-2204, Ser-2221, Ser-2225, Ser-2228, Ser-2229, and Ser-2260. The span at 2226-2237 shows a compositional bias: polar residues; the sequence is EGSSSEATTPVI. Residues 2271–2287 show a composition bias toward low complexity; sequence DLTPLSPAPSASLDLAP. A compositionally biased stretch (pro residues) spans 2288-2298; sequence APAPAPAPAPG. A compositionally biased stretch (low complexity) spans 2299-2309; it reads LPGDLGDGTLP. A compositionally biased stretch (basic and acidic residues) spans 2352 to 2364; that stretch reads AEKEEAEAPHAWE. The residue at position 2424 (Ser-2424) is a Phosphoserine. Residues 2477 to 2489 are compositionally biased toward low complexity; it reads SASDSGSSQSDSD. Positions 2534–2550 are enriched in pro residues; the sequence is DPPPTPLPDPRPSPPRP. A compositionally biased stretch (basic and acidic residues) spans 2565-2575; the sequence is GRVERLREKGR. Residues 2613–2623 are compositionally biased toward low complexity; that stretch reads RTVPRPRSTPS. Ser-2620 and Ser-2635 each carry phosphoserine.

The protein belongs to the MAP1 family. 3 different light chains, LC1 (a cleavage product of MAP1B), LC2 (a cleavage product of MAP1A) and LC3 (produced by one of the MAP1LC3 genes), can associate with the MAP1A or MAP1B heavy chains. Interacts with guanylate kinase-like domain of DLG1, DLG2 and DLG4. Binds to CSNK1D. Interacts with TIAM2. In terms of assembly, interacts with ELAVL4. Phosphorylated by CSNK1D. Post-translationally, LC2 is generated from MAP1A by proteolytic processing. It is free to associate with both MAP1A and MAP1B. In terms of tissue distribution, brain, heart and muscle.

It localises to the cytoplasm. The protein localises to the cytoskeleton. Structural protein involved in the filamentous cross-bridging between microtubules and other skeletal elements. The protein is Microtubule-associated protein 1A (Map1a) of Rattus norvegicus (Rat).